The following is a 62-amino-acid chain: Large ribosomal subunit protein bL28 (62 aa).

Residues 1 to 24 (MARKCVITGRKTKAGNNRSHAMNS) are disordered. Over residues 14-24 (AGNNRSHAMNS) the composition is skewed to polar residues.

This sequence belongs to the bacterial ribosomal protein bL28 family.

In Bacillus pumilus (strain SAFR-032), this protein is Large ribosomal subunit protein bL28.